A 187-amino-acid chain; its full sequence is Acireductone dioxygenase (187 aa).

Fe(2+)-binding residues include His87, His89, Glu93, and His136. 4 residues coordinate Ni(2+): His87, His89, Glu93, and His136.

The protein belongs to the acireductone dioxygenase (ARD) family. It depends on Fe(2+) as a cofactor. The cofactor is Ni(2+).

Its subcellular location is the cytoplasm. It is found in the nucleus. The enzyme catalyses 1,2-dihydroxy-5-(methylsulfanyl)pent-1-en-3-one + O2 = 4-methylsulfanyl-2-oxobutanoate + formate + 2 H(+). The catalysed reaction is 1,2-dihydroxy-5-(methylsulfanyl)pent-1-en-3-one + O2 = 3-(methylsulfanyl)propanoate + CO + formate + 2 H(+). The protein operates within amino-acid biosynthesis; L-methionine biosynthesis via salvage pathway; L-methionine from S-methyl-5-thio-alpha-D-ribose 1-phosphate: step 5/6. Functionally, catalyzes 2 different reactions between oxygen and the acireductone 1,2-dihydroxy-3-keto-5-methylthiopentene (DHK-MTPene) depending upon the metal bound in the active site. Fe-containing acireductone dioxygenase (Fe-ARD) produces formate and 2-keto-4-methylthiobutyrate (KMTB), the alpha-ketoacid precursor of methionine in the methionine recycle pathway. Ni-containing acireductone dioxygenase (Ni-ARD) produces methylthiopropionate, carbon monoxide and formate, and does not lie on the methionine recycle pathway. The protein is Acireductone dioxygenase of Cryptococcus neoformans var. neoformans serotype D (strain JEC21 / ATCC MYA-565) (Filobasidiella neoformans).